We begin with the raw amino-acid sequence, 112 residues long: Small ribosomal subunit protein bS6 (112 aa).

The protein belongs to the bacterial ribosomal protein bS6 family.

Functionally, binds together with bS18 to 16S ribosomal RNA. The protein is Small ribosomal subunit protein bS6 (rpsF) of Chlamydia muridarum (strain MoPn / Nigg).